The chain runs to 272 residues: Single-strand selective monofunctional uracil DNA glycosylase (272 aa).

The segment at 1 to 27 is disordered; that stretch reads MAVPQPFPSGPHLQPAGALMEPQPSPR. 3 residues coordinate substrate: M86, F100, and N165. A DNA-binding region spans residues 175–189; the sequence is SGRNITPAELPAKQR. Substrate is bound at residue H241.

Belongs to the uracil-DNA glycosylase (UDG) superfamily. SMUG1 family.

The protein resides in the nucleus. In terms of biological role, recognizes base lesions in the genome and initiates base excision DNA repair. Acts as a monofunctional DNA glycosylase specific for uracil (U) residues in DNA with a preference for single-stranded DNA substrates. The activity is greater toward mismatches (U/G) compared to matches (U/A). Excises uracil (U), 5-formyluracil (fU) and uracil derivatives bearing an oxidized group at C5 [5-hydroxyuracil (hoU) and 5-hydroxymethyluracil (hmU)] in ssDNA and dsDNA, but not analogous cytosine derivatives (5-hydroxycytosine and 5-formylcytosine), nor other oxidized bases. The activity is damage-specific and salt-dependent. The substrate preference is the following: ssDNA &gt; dsDNA (G pair) = dsDNA (A pair) at low salt concentration, and dsDNA (G pair) &gt; dsDNA (A pair) &gt; ssDNA at high salt concentration. This chain is Single-strand selective monofunctional uracil DNA glycosylase (SMUG1), found in Bos taurus (Bovine).